Consider the following 502-residue polypeptide: Cysteine protease RavZ (502 aa).

Short sequence motifs (LIR) lie at residues 9-23 (DKLIVDEFEELGEQE) and 23-37 (ESDIDEFDLLEGDEK). Residues 49–325 (SIYPPETSWE…ESALTEGKTL (277 aa)) form a catalytic region region. Catalysis depends on residues His176 and Asp197. An alpha-3 helix region spans residues 211–217 (YFKGKYR). Cys258 is an active-site residue. Positions 326-431 (PVQLSEFIVA…VLPCVKFDDT (106 aa)) are membrane targeting region. An LIR 3 motif is present at residues 429-443 (DDTIDDFVTIEKDEL).

Its subcellular location is the secreted. The protein resides in the host cytoplasmic vesicle membrane. The enzyme catalyses [protein]-C-terminal L-amino acid-glycyl-phosphatidylethanolamide + H2O = a 1,2-diacyl-sn-glycero-3-phosphoethanolamine-N-glycine + [protein]-C-terminal &lt;stereo&gt;L-&lt;/stereo&gt;amino acid. It carries out the reaction [protein]-C-terminal L-amino acid-glycyl-phosphatidylserine + H2O = 1,2-diacyl-sn-glycero-3-phospho-L-serine-N-glycine + [protein]-C-terminal &lt;stereo&gt;L-&lt;/stereo&gt;amino acid. Its function is as follows. Cysteine protease effector that inhibits host cell autophagy by targeting lipid-conjugated ATG8 family proteins on pre-autophagosomal structures. Specifically hydrolyzes the amide bond between the C-terminal glycine residue and an adjacent aromatic residue in ATG8 proteins conjugated to phosphatidylethanolamine (PE), producing an ATG8 protein that cannot be reconjugated by host ATG7 and ATG3. Mechanistically, Ravz interacts with ATG8 proteins conjugated to PE via its LIR motifs, extracts them from the membrane of autophagosomes and integrates the PE part into its own lipid-binding site. It then removes the lipid component of the ATG8 protein. Also able to mediate delipidation of ATG8 proteins conjugated to phosphatidylserine (PS) during non-canonical autophagy. Inhibits host ubiquitin recruitment to bacteria-containing vacuoles, suggesting that it is able to mediate delipidation of other proteins in addition to ATG8 proteins. It is however not involved in the exclusion of autophagy adapters from bacteria-containing vacuoles decorated with ubiquitin. This Legionella pneumophila subsp. pneumophila (strain Philadelphia 1 / ATCC 33152 / DSM 7513) protein is Cysteine protease RavZ.